An 82-amino-acid polypeptide reads, in one-letter code: MVTIRLARGGAKKRPFYQVVVTDSRNARDGRFIERVGFFNPIASGQAEALRLDLDRIEHWIGLGATVSDRVSVLIKDAKKAA.

This sequence belongs to the bacterial ribosomal protein bS16 family.

The chain is Small ribosomal subunit protein bS16 from Yersinia pseudotuberculosis serotype O:1b (strain IP 31758).